We begin with the raw amino-acid sequence, 373 residues long: tRNA-specific 2-thiouridylase MnmA (373 aa).

ATP is bound by residues 12-19 (GMSGGVDS) and Met38. The tract at residues 98–100 (NPD) is interaction with target base in tRNA. Cys103 serves as the catalytic Nucleophile. Cysteines 103 and 200 form a disulfide. Residue Gly127 participates in ATP binding. The tract at residues 150–152 (KDQ) is interaction with tRNA. Cys200 acts as the Cysteine persulfide intermediate in catalysis. The interval 312-313 (RY) is interaction with tRNA.

This sequence belongs to the MnmA/TRMU family.

The protein localises to the cytoplasm. The catalysed reaction is S-sulfanyl-L-cysteinyl-[protein] + uridine(34) in tRNA + AH2 + ATP = 2-thiouridine(34) in tRNA + L-cysteinyl-[protein] + A + AMP + diphosphate + H(+). Its function is as follows. Catalyzes the 2-thiolation of uridine at the wobble position (U34) of tRNA, leading to the formation of s(2)U34. The sequence is that of tRNA-specific 2-thiouridylase MnmA from Streptococcus pyogenes serotype M18 (strain MGAS8232).